A 145-amino-acid polypeptide reads, in one-letter code: Large ribosomal subunit protein uL11 (145 aa).

It belongs to the universal ribosomal protein uL11 family. As to quaternary structure, part of the ribosomal stalk of the 50S ribosomal subunit. Interacts with L10 and the large rRNA to form the base of the stalk. L10 forms an elongated spine to which L12 dimers bind in a sequential fashion forming a multimeric L10(L12)X complex. Post-translationally, one or more lysine residues are methylated.

In terms of biological role, forms part of the ribosomal stalk which helps the ribosome interact with GTP-bound translation factors. The protein is Large ribosomal subunit protein uL11 of Corynebacterium glutamicum (strain ATCC 13032 / DSM 20300 / JCM 1318 / BCRC 11384 / CCUG 27702 / LMG 3730 / NBRC 12168 / NCIMB 10025 / NRRL B-2784 / 534).